The primary structure comprises 78 residues: Small ribosomal subunit protein uS17 (78 aa).

This sequence belongs to the universal ribosomal protein uS17 family. In terms of assembly, part of the 30S ribosomal subunit.

Functionally, one of the primary rRNA binding proteins, it binds specifically to the 5'-end of 16S ribosomal RNA. The polypeptide is Small ribosomal subunit protein uS17 (Wolbachia pipientis wMel).